Consider the following 37-residue polypeptide: Large ribosomal subunit protein bL36 (37 aa).

The protein belongs to the bacterial ribosomal protein bL36 family.

The chain is Large ribosomal subunit protein bL36 from Acetivibrio thermocellus (strain ATCC 27405 / DSM 1237 / JCM 9322 / NBRC 103400 / NCIMB 10682 / NRRL B-4536 / VPI 7372) (Clostridium thermocellum).